The chain runs to 191 residues: Ribosomal RNA small subunit methyltransferase G (191 aa).

S-adenosyl-L-methionine contacts are provided by residues Gly-62, Phe-67, Ile-111–Glu-112, and Arg-124.

This sequence belongs to the methyltransferase superfamily. RNA methyltransferase RsmG family.

It localises to the cytoplasm. It carries out the reaction guanosine(527) in 16S rRNA + S-adenosyl-L-methionine = N(7)-methylguanosine(527) in 16S rRNA + S-adenosyl-L-homocysteine. Functionally, specifically methylates the N7 position of guanine in position 527 of 16S rRNA. The chain is Ribosomal RNA small subunit methyltransferase G from Rickettsia prowazekii (strain Madrid E).